Here is a 204-residue protein sequence, read N- to C-terminus: Probable GTP-binding protein EngB (204 aa).

The EngB-type G domain maps to T23–M195. GTP-binding positions include G31–S38, G58–E62, D76–G79, T143–D146, and F174–A176. 2 residues coordinate Mg(2+): S38 and T60.

Belongs to the TRAFAC class TrmE-Era-EngA-EngB-Septin-like GTPase superfamily. EngB GTPase family. Requires Mg(2+) as cofactor.

Its function is as follows. Necessary for normal cell division and for the maintenance of normal septation. This is Probable GTP-binding protein EngB from Gemmatimonas aurantiaca (strain DSM 14586 / JCM 11422 / NBRC 100505 / T-27).